A 282-amino-acid chain; its full sequence is Acyl-CoA-binding domain-containing protein 6 (282 aa).

Over residues 1–12 (MASSFLPSGATT) the composition is skewed to polar residues. The disordered stretch occupies residues 1-34 (MASSFLPSGATTGDSGGELSSGDDSGDVESLQSP). Low complexity predominate over residues 17 to 31 (GELSSGDDSGDVESL). Serine 41 is modified (phosphoserine). In terms of domain architecture, ACB spans 42–127 (LPELFEKAAE…VKKLDPSWNP (86 aa)). An acyl-CoA is bound by residues 69–73 (YARYK) and lysine 95. Residue serine 106 is modified to Phosphoserine. Tyrosine 114 contacts an acyl-CoA. 2 ANK repeats span residues 191 to 220 (EGRTLLHWACDRGHKELVTVLLQYRADINC) and 224 to 253 (EGQTALHYAAACEFLDIVELLLQSGADPTL).

Monomer.

It localises to the cytoplasm. In terms of biological role, binds long-chain acyl-coenzyme A molecules with a strong preference for unsaturated C18:1-CoA, lower affinity for unsaturated C20:4-CoA, and very weak affinity for saturated C16:0-CoA. Does not bind fatty acids. The polypeptide is Acyl-CoA-binding domain-containing protein 6 (ACBD6) (Bos taurus (Bovine)).